We begin with the raw amino-acid sequence, 367 residues long: Glutamate 5-kinase (367 aa).

Position 10 (Lys10) interacts with ATP. Substrate contacts are provided by Ser50, Asp137, and Asn149. Residues Thr169–Asp170 and Thr211–Lys217 contribute to the ATP site. Residues Ala275–Glu353 enclose the PUA domain.

It belongs to the glutamate 5-kinase family.

Its subcellular location is the cytoplasm. It carries out the reaction L-glutamate + ATP = L-glutamyl 5-phosphate + ADP. It functions in the pathway amino-acid biosynthesis; L-proline biosynthesis; L-glutamate 5-semialdehyde from L-glutamate: step 1/2. Catalyzes the transfer of a phosphate group to glutamate to form L-glutamate 5-phosphate. The protein is Glutamate 5-kinase of Klebsiella pneumoniae (strain 342).